Here is a 231-residue protein sequence, read N- to C-terminus: Deoxyribose-phosphate aldolase (231 aa).

Catalysis depends on aspartate 97, which acts as the Proton donor/acceptor. Lysine 162 serves as the catalytic Schiff-base intermediate with acetaldehyde. Catalysis depends on lysine 191, which acts as the Proton donor/acceptor.

The protein belongs to the DeoC/FbaB aldolase family. DeoC type 1 subfamily.

The protein localises to the cytoplasm. It catalyses the reaction 2-deoxy-D-ribose 5-phosphate = D-glyceraldehyde 3-phosphate + acetaldehyde. Its pathway is carbohydrate degradation; 2-deoxy-D-ribose 1-phosphate degradation; D-glyceraldehyde 3-phosphate and acetaldehyde from 2-deoxy-alpha-D-ribose 1-phosphate: step 2/2. Its function is as follows. Catalyzes a reversible aldol reaction between acetaldehyde and D-glyceraldehyde 3-phosphate to generate 2-deoxy-D-ribose 5-phosphate. In Caldanaerobacter subterraneus subsp. tengcongensis (strain DSM 15242 / JCM 11007 / NBRC 100824 / MB4) (Thermoanaerobacter tengcongensis), this protein is Deoxyribose-phosphate aldolase.